The primary structure comprises 647 residues: DNA topoisomerase 3 (647 aa).

The Toprim domain maps to 2 to 135 (TRLFIAEKPS…KKETVQRLLI (134 aa)). Mg(2+) is bound by residues glutamate 8, aspartate 104, and aspartate 106. Positions 156 to 608 (FIPLSVSALA…TLQGRLEQLI (453 aa)) constitute a Topo IA-type catalytic domain. The segment at 195 to 200 (SVGRVQ) is interaction with DNA. The active-site O-(5'-phospho-DNA)-tyrosine intermediate is tyrosine 332.

This sequence belongs to the type IA topoisomerase family. Mg(2+) serves as cofactor.

The enzyme catalyses ATP-independent breakage of single-stranded DNA, followed by passage and rejoining.. Its function is as follows. Releases the supercoiling and torsional tension of DNA, which is introduced during the DNA replication and transcription, by transiently cleaving and rejoining one strand of the DNA duplex. Introduces a single-strand break via transesterification at a target site in duplex DNA. The scissile phosphodiester is attacked by the catalytic tyrosine of the enzyme, resulting in the formation of a DNA-(5'-phosphotyrosyl)-enzyme intermediate and the expulsion of a 3'-OH DNA strand. The free DNA strand then undergoes passage around the unbroken strand, thus removing DNA supercoils. Finally, in the religation step, the DNA 3'-OH attacks the covalent intermediate to expel the active-site tyrosine and restore the DNA phosphodiester backbone. This Vibrio cholerae serotype O1 (strain ATCC 39315 / El Tor Inaba N16961) protein is DNA topoisomerase 3.